The sequence spans 504 residues: Maturase K (504 aa).

It belongs to the intron maturase 2 family. MatK subfamily.

The protein localises to the plastid. The protein resides in the chloroplast. Usually encoded in the trnK tRNA gene intron. Probably assists in splicing its own and other chloroplast group II introns. This is Maturase K from Quercus gemelliflora (Pasang hiris).